The sequence spans 206 residues: MEFLMTLVFLVLLVEIVFCTFFMLPVSMHLRKNVYNKLDKLFGGQNAKIFLKVLALLVIIVFCDSIVNSYNINKKLHTPELTGAKFDRQNEYTRMFRYQRNSYICGFCLYLFFLIYRSQGIISQLSNVEASKTAIEKQTKNNLNTVETLLSENEKLKTEIKDLKKMEKEHKAMKSQAENTTKEYLKLQEEYNQLLGKKPKTQKKDD.

Topologically, residues 1–2 are lumenal; it reads ME. The helical transmembrane segment at 3-23 threads the bilayer; that stretch reads FLMTLVFLVLLVEIVFCTFFM. The Cytoplasmic segment spans residues 24–46; the sequence is LPVSMHLRKNVYNKLDKLFGGQN. Residues 47–67 form a helical membrane-spanning segment; it reads AKIFLKVLALLVIIVFCDSIV. Residues 68-101 are Lumenal-facing; that stretch reads NSYNINKKLHTPELTGAKFDRQNEYTRMFRYQRN. Residues 102–122 traverse the membrane as a helical segment; that stretch reads SYICGFCLYLFFLIYRSQGII. At 123–206 the chain is on the cytoplasmic side; the sequence is SQLSNVEASK…KKPKTQKKDD (84 aa). Residues 140–198 adopt a coiled-coil conformation; that stretch reads KNNLNTVETLLSENEKLKTEIKDLKKMEKEHKAMKSQAENTTKEYLKLQEEYNQLLGKK. The Di-lysine motif motif lies at 203 to 206; the sequence is KKDD.

It belongs to the BCAP29/BCAP31 family.

The protein resides in the endoplasmic reticulum membrane. In terms of biological role, may play a role in anterograde transport of membrane proteins from the endoplasmic reticulum to the Golgi. The sequence is that of Endoplasmic reticulum transmembrane protein YET-like from Dictyostelium discoideum (Social amoeba).